A 222-amino-acid chain; its full sequence is Endonuclease V (222 aa).

Mg(2+) is bound by residues aspartate 43 and aspartate 109.

Belongs to the endonuclease V family. The cofactor is Mg(2+).

Its subcellular location is the cytoplasm. The catalysed reaction is Endonucleolytic cleavage at apurinic or apyrimidinic sites to products with a 5'-phosphate.. In terms of biological role, DNA repair enzyme involved in the repair of deaminated bases. Selectively cleaves double-stranded DNA at the second phosphodiester bond 3' to a deoxyinosine leaving behind the intact lesion on the nicked DNA. This Roseiflexus sp. (strain RS-1) protein is Endonuclease V.